The primary structure comprises 341 residues: AB hydrolase superfamily protein C1039.03 (341 aa).

Belongs to the AB hydrolase superfamily.

The protein localises to the cytoplasm. It localises to the nucleus. The protein is AB hydrolase superfamily protein C1039.03 of Schizosaccharomyces pombe (strain 972 / ATCC 24843) (Fission yeast).